The primary structure comprises 582 residues: MNQNGTRLCYSVREVPPTSFVSAPANYKRASSHCTYTIPAASALTVLYYPFFTAQDRCKICILITIAILATLPWDSYLIRSAIWTYPPDAVVGLKILDIPIEEVFFFAIQTYITSLTYCIFTKPLVRPMYLRSHLERRGTRYVVATVILALMGGGTACLLLGRRMTYLGLILVWACPILLFQWMMSYPFLSELPWKPTITSICLPTLHLWFADSRAMGTGTWRIEEGTKLNFRIGGLELEEALFFLVSNMMVVLGLVGCDYAYALQEYESLSQPASDVYITLRKALSLLARPLPIDASLISALSQAVYRLQEKSQSMFLGSALFQGQLRIDLIFLYSFCRVMDDLIDEAEDEQEARFWVTECRHLLDSTHRSEPHSDHFYTGKKGEEHERLRQSISYLPPSHLSNDSFDDLLKGFEIDLKFNPQREAFPIQSEYCLDQYAGFVAGTVGVLVFDLTLFHCGHYFIQDVPRLRRAAKDMGKAMQCQPRGDGGATSGRKRAIAGNRGELYGYWTTAEGAERHKPGASVEDEGAFGATAKSWLAGDVITELCHCFIQAEYVIYLVRHQNASADTLVLLSALVYRLE.

Residues 1–261 (MNQNGTRLCY…VVLGLVGCDY (261 aa)) form a lycopene beta-cyclase region. 6 helical membrane-spanning segments follow: residues 34–54 (CTYT…FFTA), 59–79 (KICI…SYLI), 99–121 (IPIE…YCIF), 142–162 (YVVA…LLLG), 170–190 (LILV…YPFL), and 242–262 (ALFF…CDYA). The interval 268–582 (YESLSQPASD…LLSALVYRLE (315 aa)) is phytoene synthase.

It in the N-terminal section; belongs to the lycopene beta-cyclase family. In the C-terminal section; belongs to the phytoene/squalene synthase family.

It localises to the membrane. It carries out the reaction all-trans-lycopene = gamma-carotene. The catalysed reaction is gamma-carotene = all-trans-beta-carotene. It catalyses the reaction 2 (2E,6E,10E)-geranylgeranyl diphosphate = 15-cis-phytoene + 2 diphosphate. It participates in carotenoid biosynthesis; beta-carotene biosynthesis. Its pathway is carotenoid biosynthesis; phytoene biosynthesis; all-trans-phytoene from geranylgeranyl diphosphate: step 1/1. In terms of biological role, bifunctional enzyme that catalyzes the reactions from geranylgeranyl diphosphate to phytoene (phytoene synthase) and lycopene to beta-carotene via the intermediate gamma-carotene (lycopene cyclase). In Aspergillus niger (strain ATCC MYA-4892 / CBS 513.88 / FGSC A1513), this protein is Bifunctional lycopene cyclase/phytoene synthase.